A 902-amino-acid chain; its full sequence is HTH-type transcriptional regulator MalT (902 aa).

39–46 serves as a coordination point for ATP; it reads SPAGYGKT. An HTH luxR-type domain is found at 832 to 897; the sequence is ELVRTSPLTQ…EAIVTAENLL (66 aa). Positions 856–875 form a DNA-binding region, H-T-H motif; sequence NEQIAQELDVAGTTIKTHIR.

Belongs to the MalT family. As to quaternary structure, monomer in solution. Oligomerizes to an active state in the presence of the positive effectors ATP and maltotriose.

Activated by ATP and maltotriose, which are both required for DNA binding. In terms of biological role, positively regulates the transcription of the maltose regulon whose gene products are responsible for uptake and catabolism of malto-oligosaccharides. Specifically binds to the promoter region of its target genes, recognizing a short DNA motif called the MalT box. The protein is HTH-type transcriptional regulator MalT of Vibrio campbellii (strain ATCC BAA-1116).